Here is a 143-residue protein sequence, read N- to C-terminus: Transcriptional regulator MraZ (143 aa).

2 consecutive SpoVT-AbrB domains span residues 5-47 (EFEH…PMTE) and 76-119 (ATEC…SAER).

Belongs to the MraZ family. As to quaternary structure, forms oligomers.

It localises to the cytoplasm. Its subcellular location is the nucleoid. This chain is Transcriptional regulator MraZ, found in Levilactobacillus brevis (strain ATCC 367 / BCRC 12310 / CIP 105137 / JCM 1170 / LMG 11437 / NCIMB 947 / NCTC 947) (Lactobacillus brevis).